A 163-amino-acid chain; its full sequence is Ribosome maturation factor RimP (163 aa).

The protein belongs to the RimP family.

It localises to the cytoplasm. Functionally, required for maturation of 30S ribosomal subunits. The polypeptide is Ribosome maturation factor RimP (Bordetella petrii (strain ATCC BAA-461 / DSM 12804 / CCUG 43448)).